The following is a 333-amino-acid chain: Probable G-protein coupled receptor 33 (333 aa).

Residues 1–30 are Extracellular-facing; the sequence is MDLINSTDYLINASTLVRNSTQFLAPASKM. N-linked (GlcNAc...) asparagine glycans are attached at residues asparagine 5, asparagine 12, and asparagine 19. The chain crosses the membrane as a helical span at residues 31–53; the sequence is IIALSLYISSIIGTITNGLYLWV. The Cytoplasmic segment spans residues 54 to 64; the sequence is LRFKMKQTVNT. A helical transmembrane segment spans residues 65 to 86; that stretch reads LLFFHLILSYFISTMILPFMAT. Residues 87–103 are Extracellular-facing; the sequence is SQLQDNHWNFGTALCKV. Cysteines 101 and 179 form a disulfide. A helical transmembrane segment spans residues 104-124; it reads FNGTLSLGMFTSVFFLSAIGL. The Cytoplasmic segment spans residues 125-143; it reads DRYLLTLHPVWSQQHRTPR. The chain crosses the membrane as a helical span at residues 144–165; that stretch reads WASSIVLGVWISAAALSIPYLI. The Extracellular segment spans residues 166-209; it reads FRQTHHDRKGKVTCQNNYAVSTNWESKEMQALRQWIHVACFISR. Residues 210–230 traverse the membrane as a helical segment; it reads FLLGFLLPFFIIIFCYERVAS. Over 231 to 246 the chain is Cytoplasmic; the sequence is KVKERSLFKSSKPFKV. A helical transmembrane segment spans residues 247 to 268; the sequence is MMTAIISFFVCWMPYHIHQGLL. Residues 269–283 are Extracellular-facing; that stretch reads LTTNQSLLLELTLIL. A glycan (N-linked (GlcNAc...) asparagine) is linked at asparagine 272. The chain crosses the membrane as a helical span at residues 284 to 303; the sequence is TVLTTSFNTIFSPTLYLFVG. At 304 to 333 the chain is on the cytoplasmic side; the sequence is ENFKKVFKKSILALFESTFSEDSSVERTQT.

This sequence belongs to the G-protein coupled receptor 1 family.

It is found in the cell membrane. Orphan receptor; could be a chemoattractant receptor. This chain is Probable G-protein coupled receptor 33 (GPR33), found in Pan troglodytes (Chimpanzee).